Here is a 380-residue protein sequence, read N- to C-terminus: Chorismate synthase (380 aa).

Arginine 47 lines the NADP(+) pocket. FMN is bound by residues 124–126 (RSS), glycine 288, 303–307 (KPTST), and arginine 329.

It belongs to the chorismate synthase family. In terms of assembly, homotetramer. FMNH2 is required as a cofactor.

It carries out the reaction 5-O-(1-carboxyvinyl)-3-phosphoshikimate = chorismate + phosphate. The protein operates within metabolic intermediate biosynthesis; chorismate biosynthesis; chorismate from D-erythrose 4-phosphate and phosphoenolpyruvate: step 7/7. Catalyzes the anti-1,4-elimination of the C-3 phosphate and the C-6 proR hydrogen from 5-enolpyruvylshikimate-3-phosphate (EPSP) to yield chorismate, which is the branch point compound that serves as the starting substrate for the three terminal pathways of aromatic amino acid biosynthesis. This reaction introduces a second double bond into the aromatic ring system. This is Chorismate synthase from Leptospira borgpetersenii serovar Hardjo-bovis (strain JB197).